Reading from the N-terminus, the 201-residue chain is uncharacterized protein (201 aa).

2 disordered regions span residues 46-80 (PLVN…SYDE) and 143-201 (SSTS…ANPA). Polar residues-rich tracts occupy residues 64 to 78 (GSQN…SQSY) and 143 to 167 (SSTS…NSPA).

This is an uncharacterized protein from Legionella pneumophila.